The following is a 662-amino-acid chain: DNA ligase (662 aa).

NAD(+) contacts are provided by residues 31-35, 79-80, and Glu-119; these read DSEYD and SL. Lys-121 functions as the N6-AMP-lysine intermediate in the catalytic mechanism. Positions 142, 176, 288, and 312 each coordinate NAD(+). 4 residues coordinate Zn(2+): Cys-405, Cys-408, Cys-421, and Cys-427. The region spanning 583–662 is the BRCT domain; it reads NIEKKLDNLT…DELNSFLDNL (80 aa).

It belongs to the NAD-dependent DNA ligase family. LigA subfamily. The cofactor is Mg(2+). Requires Mn(2+) as cofactor.

The catalysed reaction is NAD(+) + (deoxyribonucleotide)n-3'-hydroxyl + 5'-phospho-(deoxyribonucleotide)m = (deoxyribonucleotide)n+m + AMP + beta-nicotinamide D-nucleotide.. DNA ligase that catalyzes the formation of phosphodiester linkages between 5'-phosphoryl and 3'-hydroxyl groups in double-stranded DNA using NAD as a coenzyme and as the energy source for the reaction. It is essential for DNA replication and repair of damaged DNA. The chain is DNA ligase from Finegoldia magna (strain ATCC 29328 / DSM 20472 / WAL 2508) (Peptostreptococcus magnus).